The sequence spans 131 residues: MAFFNLYLLGYQNSFQNKKRNTTEETNQKEPEPTRLPPIISKDGNYSVHQNSHTRYHEAVRKVLLKTFPNQVFRIPLTDAQNFSFWWSHDPGVRPEETMPWIRSPRHCLIKSAMTRFMDHSILNDRTFSLY.

A disordered region spans residues 18 to 44; it reads KKRNTTEETNQKEPEPTRLPPIISKDG. Over residues 21 to 33 the composition is skewed to basic and acidic residues; the sequence is NTTEETNQKEPEP.

As to quaternary structure, microtubule inner protein component of sperm flagellar doublet microtubules.

The protein localises to the cytoplasm. The protein resides in the cytoskeleton. Its subcellular location is the flagellum axoneme. Microtubule inner protein (MIP) part of the dynein-decorated doublet microtubules (DMTs) in flagellum axoneme. May serve to reinforce and thus stabilize the microtubule structure in the sperm flagella. In Homo sapiens (Human), this protein is Sperm microtubule inner protein 11.